A 275-amino-acid chain; its full sequence is Vitamin B12-binding protein (275 aa).

Residues 1–19 (MMNKLCFALPLIFSDASFA) form the signal peptide. In terms of domain architecture, Fe/B12 periplasmic-binding spans 25–272 (RIISLAPHST…EVCEHFETVR (248 aa)). An intrachain disulfide couples cysteine 185 to cysteine 265.

The protein belongs to the BtuF family. In terms of assembly, the complex is composed of two ATP-binding proteins (BtuD), two transmembrane proteins (BtuC) and a solute-binding protein (BtuF).

It is found in the periplasm. In terms of biological role, part of the ABC transporter complex BtuCDF involved in vitamin B12 import. Binds vitamin B12 and delivers it to the periplasmic surface of BtuC. The sequence is that of Vitamin B12-binding protein from Vibrio campbellii (strain ATCC BAA-1116).